Here is a 497-residue protein sequence, read N- to C-terminus: Zinc finger protein 3 (497 aa).

Residues 1-20 (MGTEKKEGLPKEETSEDSKP) are compositionally biased toward basic and acidic residues. The interval 1-53 (MGTEKKEGLPKEETSEDSKPHGQTVEKLAQEVCHGHEFGEASEEDMSEGHLRE) is disordered. Residues K6 and K11 each participate in a glycyl lysine isopeptide (Lys-Gly) (interchain with G-Cter in SUMO2) cross-link. 13 C2H2-type zinc fingers span residues 136 to 158 (HTCK…MRVH), 164 to 186 (FECK…QRIH), 192 to 214 (FACT…HRIH), 220 to 242 (YKCE…QRIH), 248 to 270 (YECN…QRIH), 276 to 298 (HECS…QKIH), 304 to 326 (YLCN…QRIH), 332 to 354 (YECS…IRIH), 360 to 382 (YVCK…ERIH), 388 to 410 (YECF…QRIH), 416 to 438 (HQCN…QKIH), 444 to 466 (YECS…QRIH), and 472 to 494 (YECQ…QSVH).

The protein belongs to the krueppel C2H2-type zinc-finger protein family.

It is found in the nucleus. May be involved in transcriptional regulation. This is Zinc finger protein 3 (Zfp3) from Mus musculus (Mouse).